The chain runs to 350 residues: Isopentenyl-diphosphate delta-isomerase (350 aa).

15 to 16 (RK) provides a ligand contact to substrate. Residues Ser-73, 74–76 (SMT), Ser-104, and Asn-132 contribute to the FMN site. 104–106 (SQR) lines the substrate pocket. A substrate-binding site is contributed by Gln-167. Glu-168 provides a ligand contact to Mg(2+). FMN is bound by residues Lys-199, Thr-229, 279 to 281 (GLR), and 300 to 301 (AM).

Belongs to the IPP isomerase type 2 family. In terms of assembly, homooctamer. Dimer of tetramers. Requires FMN as cofactor. It depends on NADPH as a cofactor. Mg(2+) serves as cofactor.

The protein resides in the cytoplasm. It carries out the reaction isopentenyl diphosphate = dimethylallyl diphosphate. Its function is as follows. Involved in the biosynthesis of isoprenoids. Catalyzes the 1,3-allylic rearrangement of the homoallylic substrate isopentenyl (IPP) to its allylic isomer, dimethylallyl diphosphate (DMAPP). The polypeptide is Isopentenyl-diphosphate delta-isomerase (Nostoc sp. (strain PCC 7120 / SAG 25.82 / UTEX 2576)).